The chain runs to 224 residues: MTKKICIAIDGPAAAGKSTVAKIVAKKLRFVYIDTGAMYRAVTYIALKNNIAYEDEKAIATLLQKTVIRFEPGEVQQVFVGEENVTEVIRSLEVTNHVSIVAAHPSIREALQERQQVFATEGGIVMDGRDIGTAVLPNAELKIFLLASVEERAERRYKENMAKGFAGDLGQLKKEIEERDHLDYTRTHSPLKKADDAIEVDTTSMSIDEVANKILSLAELKINN.

11 to 19 is an ATP binding site; it reads GPAAAGKST.

This sequence belongs to the cytidylate kinase family. Type 1 subfamily.

It is found in the cytoplasm. The enzyme catalyses CMP + ATP = CDP + ADP. It catalyses the reaction dCMP + ATP = dCDP + ADP. This chain is Cytidylate kinase, found in Listeria monocytogenes serotype 4b (strain CLIP80459).